The chain runs to 462 residues: tRNA-2-methylthio-N(6)-dimethylallyladenosine synthase (462 aa).

The MTTase N-terminal domain maps to 1–116; that stretch reads MKLFIQTLGC…ITQVLERPKA (116 aa). Residues C10, C47, C79, C148, C152, and C155 each contribute to the [4Fe-4S] cluster site. The 237-residue stretch at 134-370 folds into the Radical SAM core domain; it reads QGMGIKAHLN…NLHKEILSKK (237 aa). The TRAM domain maps to 372-436; it reads QLEIGRIHNV…GGGLMGRFIN (65 aa).

This sequence belongs to the methylthiotransferase family. MiaB subfamily. As to quaternary structure, monomer. [4Fe-4S] cluster serves as cofactor.

It localises to the cytoplasm. The catalysed reaction is N(6)-dimethylallyladenosine(37) in tRNA + (sulfur carrier)-SH + AH2 + 2 S-adenosyl-L-methionine = 2-methylsulfanyl-N(6)-dimethylallyladenosine(37) in tRNA + (sulfur carrier)-H + 5'-deoxyadenosine + L-methionine + A + S-adenosyl-L-homocysteine + 2 H(+). In terms of biological role, catalyzes the methylthiolation of N6-(dimethylallyl)adenosine (i(6)A), leading to the formation of 2-methylthio-N6-(dimethylallyl)adenosine (ms(2)i(6)A) at position 37 in tRNAs that read codons beginning with uridine. The sequence is that of tRNA-2-methylthio-N(6)-dimethylallyladenosine synthase from Helicobacter hepaticus (strain ATCC 51449 / 3B1).